We begin with the raw amino-acid sequence, 487 residues long: GTPase Der (487 aa).

EngA-type G domains are found at residues 3–166 (PVIA…PRDA) and 193–366 (IKIA…QSAV). GTP contacts are provided by residues 9-16 (GRPNVGKS), 56-60 (DTGGI), 118-121 (NKID), 199-206 (GRPNVGKS), 246-250 (DTAGV), and 311-314 (NKWD). In terms of domain architecture, KH-like spans 367–451 (TRWPTSRLTQ…PIRIEYKGGE (85 aa)). The segment covering 448–461 (KGGENPYEGKKNTL) has biased composition (basic and acidic residues). Positions 448–487 (KGGENPYEGKKNTLTDRQVNKKRRLMSHHKKAEKKRRDKR) are disordered. Basic residues predominate over residues 467 to 487 (NKKRRLMSHHKKAEKKRRDKR).

Belongs to the TRAFAC class TrmE-Era-EngA-EngB-Septin-like GTPase superfamily. EngA (Der) GTPase family. As to quaternary structure, associates with the 50S ribosomal subunit.

In terms of biological role, GTPase that plays an essential role in the late steps of ribosome biogenesis. This chain is GTPase Der, found in Pseudomonas putida (strain ATCC 700007 / DSM 6899 / JCM 31910 / BCRC 17059 / LMG 24140 / F1).